Consider the following 68-residue polypeptide: Large ribosomal subunit protein uL29 (68 aa).

The protein belongs to the universal ribosomal protein uL29 family.

The protein is Large ribosomal subunit protein uL29 of Leuconostoc citreum (strain KM20).